The primary structure comprises 243 residues: Venom peptide isomerase heavy chain (243 aa).

The 243-residue stretch at 1–243 folds into the Peptidase S1 domain; it reads IVGGKTAKFG…YTNWMSKNMV (243 aa). A disulfide bridge links C31 with C47. Active-site charge relay system residues include H46 and D96. Residue N127 is glycosylated (N-linked (GlcNAc...) asparagine). Cystine bridges form between C159-C181 and C190-C219. S194 serves as the catalytic Charge relay system.

Belongs to the peptidase S1 family. As to quaternary structure, heterodimer with venom peptide isomerase light chain; disulfide-linked. N-linked glycan at Asn-127 consists of Man3-GlcNAc2-Fuc. In terms of tissue distribution, expressed by the venom gland.

Its subcellular location is the secreted. Functionally, peptide isomerase that inverts the chirality at the Ser-81 of omega-Aga IVB. Acts cofactor-independently. The polypeptide is Venom peptide isomerase heavy chain (Agelenopsis aperta (North American funnel-web spider)).